A 170-amino-acid polypeptide reads, in one-letter code: Large ribosomal subunit protein uL10 (170 aa).

This sequence belongs to the universal ribosomal protein uL10 family. Part of the ribosomal stalk of the 50S ribosomal subunit. The N-terminus interacts with L11 and the large rRNA to form the base of the stalk. The C-terminus forms an elongated spine to which L12 dimers bind in a sequential fashion forming a multimeric L10(L12)X complex.

Functionally, forms part of the ribosomal stalk, playing a central role in the interaction of the ribosome with GTP-bound translation factors. The chain is Large ribosomal subunit protein uL10 (rplJ) from Chlamydia pneumoniae (Chlamydophila pneumoniae).